The following is a 127-amino-acid chain: Profilin (127 aa).

This sequence belongs to the profilin family. In terms of assembly, occurs in many kinds of cells as a complex with monomeric actin in a 1:1 ratio.

It is found in the cytoplasm. It localises to the cytoskeleton. Its function is as follows. Binds to actin and affects the structure of the cytoskeleton. At high concentrations, profilin prevents the polymerization of actin, whereas it enhances it at low concentrations. By binding to PIP2, it inhibits the formation of IP3 and DG. In S.pombe, it is essential for cytokinesis. This Schizosaccharomyces pombe (strain 972 / ATCC 24843) (Fission yeast) protein is Profilin (cdc3).